A 345-amino-acid chain; its full sequence is Anthranilate phosphoribosyltransferase (345 aa).

Residues 77–79 (TAG), 82–83 (GD), threonine 87, 89–92 (NVST), 106–114 (KHGNRAVSG), and serine 118 each bind 5-phospho-alpha-D-ribose 1-diphosphate. Residue glycine 79 coordinates anthranilate. Serine 91 serves as a coordination point for Mg(2+). Asparagine 109 serves as a coordination point for anthranilate. Anthranilate is bound at residue arginine 164. Mg(2+) is bound by residues aspartate 223 and glutamate 224.

This sequence belongs to the anthranilate phosphoribosyltransferase family. As to quaternary structure, homodimer. Mg(2+) serves as cofactor.

The enzyme catalyses N-(5-phospho-beta-D-ribosyl)anthranilate + diphosphate = 5-phospho-alpha-D-ribose 1-diphosphate + anthranilate. It participates in amino-acid biosynthesis; L-tryptophan biosynthesis; L-tryptophan from chorismate: step 2/5. Its function is as follows. Catalyzes the transfer of the phosphoribosyl group of 5-phosphorylribose-1-pyrophosphate (PRPP) to anthranilate to yield N-(5'-phosphoribosyl)-anthranilate (PRA). In Saccharolobus solfataricus (strain ATCC 35092 / DSM 1617 / JCM 11322 / P2) (Sulfolobus solfataricus), this protein is Anthranilate phosphoribosyltransferase.